We begin with the raw amino-acid sequence, 149 residues long: Transcriptional repressor NrdR (149 aa).

The segment at 3–34 (CPFCGHLETQVVETRISEDAEFIRRRRQCGAC) is a zinc-finger region. Positions 49–139 (PSIVKKDGRR…VYRSFEDIDE (91 aa)) constitute an ATP-cone domain.

This sequence belongs to the NrdR family. The cofactor is Zn(2+).

Negatively regulates transcription of bacterial ribonucleotide reductase nrd genes and operons by binding to NrdR-boxes. In Polaromonas naphthalenivorans (strain CJ2), this protein is Transcriptional repressor NrdR.